Here is a 435-residue protein sequence, read N- to C-terminus: Sex peptide receptor (435 aa).

The Extracellular portion of the chain corresponds to 1–93 (MDNYTDVLYQ…PLEYAMPLYG (93 aa)). Residues 94–114 (YCMPFLLIITIISNSLIVLVL) traverse the membrane as a helical segment. Residues 115-124 (SKKSMATPTN) are Cytoplasmic-facing. The chain crosses the membrane as a helical span at residues 125–145 (FVLMGMAICDMLTVIFPAPGL). The Extracellular portion of the chain corresponds to 146-168 (WYMYTFGNHYKPLHPVSMCLAYS). Residues 169–189 (IFNEIMPAMCHTISVWLTLAL) form a helical membrane-spanning segment. Residues 190–211 (AVQRYIYVCHAPMARTWCTMPR) are Cytoplasmic-facing. Residues 212 to 229 (VRRCTAYIALLAFLHQLP) form a helical membrane-spanning segment. Topologically, residues 230-276 (RFFDRTYMPLVIEWNGSPTEVCHLETSMWVHDYIGVDLYYTSYYLFR) are extracellular. A helical membrane pass occupies residues 277-297 (VLFVHLLPCIILVTLNILLFA). The Cytoplasmic segment spans residues 298–327 (AMRQAQERRKLLFRENRKKECKKLRETNCT). The chain crosses the membrane as a helical span at residues 328–348 (TLMLIVVVSVFLLAEIPIAVV). The Extracellular segment spans residues 349 to 368 (TAMHIVSSLIIEFLDYGLAN). The chain crosses the membrane as a helical span at residues 369 to 389 (ICIMLTNFFLVFSYPINFGIY). Topologically, residues 390–435 (CGMSRQFRETFKEIFLGRLMAKKDSSTKYSIVNGARTCTNTNETVL) are cytoplasmic.

This sequence belongs to the G-protein coupled receptor 1 family. In the female, expressed in the reproductive organs; strongly expressed in the spermathecae and the lower oviduct. No expression in the male reproductive organs. In the central nervous system of both sexes, it is expressed in the brain and ventral nerve cord (VNC); strongly expressed in the ventral regions of the suboesophageal ganglion, the cervical connective and in many nerve roots of the brain and VNC. Expressed in the s-LNvs and l-LNvs pdf neurons (at protein level).

It localises to the cell membrane. Receptor for two functionally unrelated ligands; SP (A70A) for controlling reproductive behaviors and MIP for controlling sleep behavior. MIP-SPR pathway functions as a sleep homeostat which perceives the need for sleep and stabilizes it by providing a slow-acting inhibitory input to the fly arousal system that involve the pigment dispersing factor (pdf) neurons. SP-SPR is one of the multiple SP pathways that induce female post-mating behavioral responses (PMR) such as the suppression of mating receptivity and initiation of egg laying. The PMR switch is achieved by mediating the synaptic output of neurons such as those expressing fruitless (fru), double sex (dsx) and pickpocket (ppk). This is Sex peptide receptor from Drosophila melanogaster (Fruit fly).